Here is a 106-residue protein sequence, read N- to C-terminus: Venom family 8-like peptide Pr8a (106 aa).

The first 17 residues, 1-17, serve as a signal peptide directing secretion; the sequence is MSPIAFLLPFLLQMVLS.

In terms of processing, contains 2 disulfide bonds. In terms of tissue distribution, expressed by the venom gland (anterior main gland) (at protein level).

The protein localises to the secreted. This is Venom family 8-like peptide Pr8a from Platymeris rhadamanthus (Red spot assassin bug).